A 296-amino-acid polypeptide reads, in one-letter code: Small ribosomal subunit biogenesis GTPase RsgA (296 aa).

Residues 65–223 (INRIGRPAVA…LADTPGFSSI (159 aa)) form the CP-type G domain. Residues 114–117 (SKAD) and 166–174 (GQSGAGKST) contribute to the GTP site. Residues cysteine 247, cysteine 252, histidine 254, and cysteine 260 each coordinate Zn(2+).

Belongs to the TRAFAC class YlqF/YawG GTPase family. RsgA subfamily. Monomer. Associates with 30S ribosomal subunit, binds 16S rRNA. Zn(2+) is required as a cofactor.

The protein localises to the cytoplasm. One of several proteins that assist in the late maturation steps of the functional core of the 30S ribosomal subunit. Helps release RbfA from mature subunits. May play a role in the assembly of ribosomal proteins into the subunit. Circularly permuted GTPase that catalyzes slow GTP hydrolysis, GTPase activity is stimulated by the 30S ribosomal subunit. This Lactobacillus acidophilus (strain ATCC 700396 / NCK56 / N2 / NCFM) protein is Small ribosomal subunit biogenesis GTPase RsgA.